The chain runs to 277 residues: Short chain dehydrogenase penD (277 aa).

NADP(+)-binding residues include I28, D76, and N105. Residues S158 and S159 each act as proton donor in the active site. NADP(+) contacts are provided by Y173, K177, and T209. The active-site Proton acceptor is the Y173. The active-site Lowers pKa of active site Tyr is the K177.

The protein belongs to the short-chain dehydrogenases/reductases (SDR) family.

The enzyme catalyses yaequinolone D + NADPH + H(+) = penigequinolone A + NADP(+) + H2O. It carries out the reaction yaequinolone D + NADPH + H(+) = penigequinolone B + NADP(+) + H2O. The protein operates within secondary metabolite biosynthesis. It participates in alkaloid biosynthesis. It functions in the pathway mycotoxin biosynthesis. Functionally, short chain dehydrogenase; part of the gene cluster that mediates the biosynthesis of penigequinolones, potent insecticidal alkaloids that contain a highly modified 10-carbon prenyl group. The first stage is catalyzed by the nonribosomal peptide synthetase penN that condenses anthranilic acid and O-methyl-L-tyrosine to produce 4'-methoxycyclopeptin. 4'-methoxycyclopeptin is then converted to 4'-methoxydehydrocyclopeptin by the ketoglutarate-dependent dioxygenase penM through dehydrogenation to form a double bond between C-alpha and C-beta of the O-methyltyrosine side chain. PenM also converts its first product methoxydehydrocyclopeptin to 4'-methoxycyclopenin. The following conversion of 4'methoxycyclopenin into 4'-methoxyviridicatin is catalyzed by the cyclopenase penL. 4'-methoxyviridicatin is the precursor of quinolone natural products, and is further converted to quinolinone B. The prenyltransferase penI then catalyzes the canonical Friedel-Crafts alkylation of quinolinone B with dimethylallyl cation to yield dimethylallyl quinolone, which is subjected to FAD-dependent dehydrogenation by the FAD-linked oxidoreductase penH to yield conjugated aryl diene. The delta(3') double bond then serves as the site of the second alkylation with DMAPP catalyzed by the prenyltransferase penG to yield a carbenium ion intermediate, which can be attacked by H(2)O to yield a styrenyl quinolone containing a C3'-hydroxyprenyl chain, or undergo cyclization to yield yaequinolones J1 and J2. The conversion of the styrenyl quinolone into the tetrahydrofuran-containing yaequinolone C is performed by the FAD-dependent monooxygenase penE and involves epoxidation of the terminal C7'-C8' olefin, followed by epoxide ring opening initiated by the C3' hydroxyl group. The predicted cysteine hydrolase penJ acts as an epoxide hydrolase that enhances the rate of the 5-exo-tet cyclization step, increasing the yield of yaequinolone C. PenF catalyzes the cationic rearrangement of the epoxide formed by penE (before ring opening to produce yaequinolone C) into yaequinolone D. Finally, the short-chain dehydrogenase/reductase (SDR)-like reductase penD, catalyzes both the dehydration of yaequinolone D and the reduction of the resulting oxonium to yield penigequinolone. The chain is Short chain dehydrogenase penD from Penicillium thymicola.